Reading from the N-terminus, the 404-residue chain is Formate-dependent phosphoribosylglycinamide formyltransferase (404 aa).

Residues 25-26 (EL) and E85 contribute to the N(1)-(5-phospho-beta-D-ribosyl)glycinamide site. Residues R118, K159, 164–169 (SSGKGQ), 199–202 (EGFI), and E207 each bind ATP. Positions 123–318 (RLAAEELGLP…EFELHARAIL (196 aa)) constitute an ATP-grasp domain. Residues E277 and E289 each coordinate Mg(2+). N(1)-(5-phospho-beta-D-ribosyl)glycinamide is bound by residues D296, K365, and 372–373 (RR).

It belongs to the PurK/PurT family. Homodimer.

The enzyme catalyses N(1)-(5-phospho-beta-D-ribosyl)glycinamide + formate + ATP = N(2)-formyl-N(1)-(5-phospho-beta-D-ribosyl)glycinamide + ADP + phosphate + H(+). Its pathway is purine metabolism; IMP biosynthesis via de novo pathway; N(2)-formyl-N(1)-(5-phospho-D-ribosyl)glycinamide from N(1)-(5-phospho-D-ribosyl)glycinamide (formate route): step 1/1. Its function is as follows. Involved in the de novo purine biosynthesis. Catalyzes the transfer of formate to 5-phospho-ribosyl-glycinamide (GAR), producing 5-phospho-ribosyl-N-formylglycinamide (FGAR). Formate is provided by PurU via hydrolysis of 10-formyl-tetrahydrofolate. The chain is Formate-dependent phosphoribosylglycinamide formyltransferase from Burkholderia pseudomallei (strain 1106a).